Reading from the N-terminus, the 314-residue chain is Hydroxyacyl-coenzyme A dehydrogenase, mitochondrial (314 aa).

The N-terminal 12 residues, 1–12, are a transit peptide targeting the mitochondrion; the sequence is MAFVTRQFVRSM. Residues 34–39 and Asp-57 contribute to the NAD(+) site; that span reads GGGLMG. Position 73 (Ser-73) interacts with CoA. Residue Lys-75 is modified to N6-acetyllysine. Residue Lys-80 participates in CoA binding. The residue at position 80 (Lys-80) is an N6-succinyllysine. N6-acetyllysine; alternate is present on residues Lys-81 and Lys-87. N6-succinyllysine; alternate is present on residues Lys-81 and Lys-87. An NAD(+)-binding site is contributed by Glu-122. An N6-acetyllysine modification is found at Lys-125. Residue Lys-127 participates in NAD(+) binding. Lys-127 carries the post-translational modification N6-(2-hydroxyisobutyryl)lysine. Lys-136 carries the N6-acetyllysine; alternate modification. An N6-succinyllysine; alternate modification is found at Lys-136. Positions 149 and 173 each coordinate NAD(+). Ser-149 contacts CoA. Residue Lys-179 is modified to N6-acetyllysine. Lys-185, Lys-192, and Lys-202 each carry N6-acetyllysine; alternate. Residues Lys-185, Lys-192, and Lys-202 each carry the N6-succinyllysine; alternate modification. At Lys-206 the chain carries N6-succinyllysine. Residues Lys-212 and Lys-241 each carry the N6-acetyllysine; alternate modification. An N6-succinyllysine; alternate mark is found at Lys-212 and Lys-241. Residue Lys-305 participates in NAD(+) binding. Position 312 is an N6-acetyllysine; alternate (Lys-312). Lys-312 carries the post-translational modification N6-succinyllysine; alternate.

It belongs to the 3-hydroxyacyl-CoA dehydrogenase family. Homodimer. Interacts with GLUD1; this interaction inhibits the activation of glutamate dehydrogenase 1 (GLUD1). Post-translationally, succinylation at Lys-81, adjacent to a coenzyme A binding site. Desuccinylated by SIRT5.

The protein resides in the mitochondrion matrix. The catalysed reaction is a (3S)-3-hydroxyacyl-CoA + NAD(+) = a 3-oxoacyl-CoA + NADH + H(+). The enzyme catalyses (3S)-3-hydroxybutanoyl-CoA + NAD(+) = acetoacetyl-CoA + NADH + H(+). It catalyses the reaction (3S)-hydroxydecanoyl-CoA + NAD(+) = 3-oxodecanoyl-CoA + NADH + H(+). It carries out the reaction (3S)-hydroxyhexadecanoyl-CoA + NAD(+) = 3-oxohexadecanoyl-CoA + NADH + H(+). Its pathway is lipid metabolism; fatty acid beta-oxidation. Its function is as follows. Mitochondrial fatty acid beta-oxidation enzyme that catalyzes the third step of the beta-oxidation cycle for medium and short-chain 3-hydroxy fatty acyl-CoAs (C4 to C10). Plays a role in the control of insulin secretion by inhibiting the activation of glutamate dehydrogenase 1 (GLUD1), an enzyme that has an important role in regulating amino acid-induced insulin secretion. Plays a role in the maintenance of normal spermatogenesis through the reduction of fatty acid accumulation in the testes. The sequence is that of Hydroxyacyl-coenzyme A dehydrogenase, mitochondrial (Hadh) from Rattus norvegicus (Rat).